We begin with the raw amino-acid sequence, 516 residues long: Delta(24)-sterol reductase (516 aa).

An N-terminal signal peptide occupies residues 1–22; the sequence is MEPAVSLAVCALLFLLWVRVKG. Over 23–31 the chain is Lumenal; sequence LEFVLIHQR. The helical transmembrane segment at 32-52 threads the bilayer; sequence WVFVCLFLLPLSLIFDIYYYV. Over 53-516 the chain is Cytoplasmic; it reads RAWVVFKLSS…YDKICKAARH (464 aa). Residues 58 to 234 form the FAD-binding PCMH-type domain; it reads FKLSSAPRLH…VAAEIRIIPA (177 aa). 163–175 is a binding site for FAD; that stretch reads TVGGLIMGTGIES.

The protein belongs to the FAD-binding oxidoreductase/transferase type 4 family. In terms of assembly, interacts with DHCR7; this interaction regulates DHCR7 activity. FAD serves as cofactor.

It is found in the endoplasmic reticulum membrane. It localises to the golgi apparatus membrane. It carries out the reaction cholesterol + NADP(+) = desmosterol + NADPH + H(+). The enzyme catalyses lanosterol + NADPH + H(+) = 24,25-dihydrolanosterol + NADP(+). The catalysed reaction is 5alpha-cholest-8-en-3beta-ol + NADP(+) = zymosterol + NADPH + H(+). It functions in the pathway steroid biosynthesis; cholesterol biosynthesis. In terms of biological role, catalyzes the reduction of the delta-24 double bond of sterol intermediates during cholesterol biosynthesis. In addition to its cholesterol-synthesizing activity, can protect cells from oxidative stress by reducing caspase 3 activity during apoptosis induced by oxidative stress. Also protects against amyloid-beta peptide-induced apoptosis. The protein is Delta(24)-sterol reductase (Dhcr24) of Rattus norvegicus (Rat).